The sequence spans 431 residues: Enolase (431 aa).

Gln-167 provides a ligand contact to (2R)-2-phosphoglycerate. Catalysis depends on Glu-209, which acts as the Proton donor. Residues Asp-246, Glu-290, and Asp-317 each coordinate Mg(2+). (2R)-2-phosphoglycerate-binding residues include Lys-342, Arg-371, Ser-372, and Lys-393. Residue Lys-342 is the Proton acceptor of the active site.

Belongs to the enolase family. As to quaternary structure, component of the RNA degradosome, a multiprotein complex involved in RNA processing and mRNA degradation. Requires Mg(2+) as cofactor.

The protein localises to the cytoplasm. It localises to the secreted. Its subcellular location is the cell surface. It carries out the reaction (2R)-2-phosphoglycerate = phosphoenolpyruvate + H2O. The protein operates within carbohydrate degradation; glycolysis; pyruvate from D-glyceraldehyde 3-phosphate: step 4/5. Functionally, catalyzes the reversible conversion of 2-phosphoglycerate (2-PG) into phosphoenolpyruvate (PEP). It is essential for the degradation of carbohydrates via glycolysis. In Yersinia enterocolitica serotype O:8 / biotype 1B (strain NCTC 13174 / 8081), this protein is Enolase.